Consider the following 179-residue polypeptide: Acireductone dioxygenase (179 aa).

Positions M7–V26 are disordered. The Fe(2+) site is built by H88, H90, E94, and H133. Ni(2+)-binding residues include H88, H90, E94, and H133.

The protein belongs to the acireductone dioxygenase (ARD) family. In terms of assembly, monomer. Interacts with MMP14. Fe(2+) serves as cofactor. The cofactor is Ni(2+). Detected in heart, colon, lung, stomach, brain, spleen, liver, skeletal muscle and kidney.

Its subcellular location is the cytoplasm. The protein localises to the nucleus. It localises to the cell membrane. It carries out the reaction 1,2-dihydroxy-5-(methylsulfanyl)pent-1-en-3-one + O2 = 4-methylsulfanyl-2-oxobutanoate + formate + 2 H(+). It catalyses the reaction 1,2-dihydroxy-5-(methylsulfanyl)pent-1-en-3-one + O2 = 3-(methylsulfanyl)propanoate + CO + formate + 2 H(+). The protein operates within amino-acid biosynthesis; L-methionine biosynthesis via salvage pathway; L-methionine from S-methyl-5-thio-alpha-D-ribose 1-phosphate: step 5/6. In terms of biological role, catalyzes 2 different reactions between oxygen and the acireductone 1,2-dihydroxy-3-keto-5-methylthiopentene (DHK-MTPene) depending upon the metal bound in the active site. Fe-containing acireductone dioxygenase (Fe-ARD) produces formate and 2-keto-4-methylthiobutyrate (KMTB), the alpha-ketoacid precursor of methionine in the methionine recycle pathway. Ni-containing acireductone dioxygenase (Ni-ARD) produces methylthiopropionate, carbon monoxide and formate, and does not lie on the methionine recycle pathway. Also down-regulates cell migration mediated by MMP14. Necessary for hepatitis C virus replication in an otherwise non-permissive cell line. In Homo sapiens (Human), this protein is Acireductone dioxygenase.